Here is a 419-residue protein sequence, read N- to C-terminus: RNA polymerase sigma factor sigD, chloroplastic (419 aa).

The transit peptide at 1 to 52 (MATTIPTTATATMCPSPPVPTISPLLRTTHQCQPSPSLSSPFSIKLSTALVC) directs the protein to the chloroplast. The short motif at 207-220 (DLIQEGSIGLLRGA) is the Polymerase core binding element. Residues 377–396 (FEEIGKSLKLSRERVRQING) constitute a DNA-binding region (H-T-H motif).

Belongs to the sigma-70 factor family. In terms of tissue distribution, mostly expressed in leaves, and to a lesser extent in roots. Present in seedlings.

Its subcellular location is the plastid. It localises to the chloroplast. Sigma factors are initiation factors that promote the attachment of plastid-encoded RNA polymerase (PEP) to specific initiation sites and are then released. Regulates transcription of the ndhF gene which codes for a subunit of the plastid NDH [NAD(P)H dehydrogenase] complex. This is RNA polymerase sigma factor sigD, chloroplastic (SIGD) from Arabidopsis thaliana (Mouse-ear cress).